Consider the following 205-residue polypeptide: MSSLRRIGKLGERSSVLFLCDMQEKFRKSIVFFPEIVSVAARMLQAAKKLEMPVIITEQHPKGLGPTVPELGADDLKKYTKTSFSMLTPEVEEELQSIPDLRSIVLCGIETQACIMSTALDLLDKGYDVHVVADACSSRSQVDRLFALSRMRQSGAFLTTSEGVLLQLLGDAKHPKFKEVQKIIMEPAPDSGLLSLFRGPNLFST.

This sequence belongs to the isochorismatase family.

In Xenopus laevis (African clawed frog), this protein is Isochorismatase domain-containing protein 2 (isoc2).